A 149-amino-acid polypeptide reads, in one-letter code: SsrA-binding protein (149 aa).

It belongs to the SmpB family.

The protein localises to the cytoplasm. Functionally, required for rescue of stalled ribosomes mediated by trans-translation. Binds to transfer-messenger RNA (tmRNA), required for stable association of tmRNA with ribosomes. tmRNA and SmpB together mimic tRNA shape, replacing the anticodon stem-loop with SmpB. tmRNA is encoded by the ssrA gene; the 2 termini fold to resemble tRNA(Ala) and it encodes a 'tag peptide', a short internal open reading frame. During trans-translation Ala-aminoacylated tmRNA acts like a tRNA, entering the A-site of stalled ribosomes, displacing the stalled mRNA. The ribosome then switches to translate the ORF on the tmRNA; the nascent peptide is terminated with the 'tag peptide' encoded by the tmRNA and targeted for degradation. The ribosome is freed to recommence translation, which seems to be the essential function of trans-translation. The protein is SsrA-binding protein of Anaplasma marginale (strain St. Maries).